The chain runs to 402 residues: Phosphoglycerate kinase (402 aa).

Substrate is bound by residues 24–26 (DFN), Arg-40, 63–66 (HFGR), Arg-122, and Arg-155. ATP-binding positions include Lys-206, Gly-297, Glu-328, and 358 to 361 (GGDS).

The protein belongs to the phosphoglycerate kinase family. As to quaternary structure, monomer.

Its subcellular location is the cytoplasm. The enzyme catalyses (2R)-3-phosphoglycerate + ATP = (2R)-3-phospho-glyceroyl phosphate + ADP. It functions in the pathway carbohydrate degradation; glycolysis; pyruvate from D-glyceraldehyde 3-phosphate: step 2/5. In Prochlorococcus marinus (strain MIT 9301), this protein is Phosphoglycerate kinase.